The sequence spans 404 residues: Cysteine desulfurase IscS (404 aa).

Pyridoxal 5'-phosphate-binding positions include 75–76, N155, Q183, and 203–205; these read AT and SAH. Residue K206 is modified to N6-(pyridoxal phosphate)lysine. T243 is a pyridoxal 5'-phosphate binding site. The active-site Cysteine persulfide intermediate is the C328. [2Fe-2S] cluster is bound at residue C328.

Belongs to the class-V pyridoxal-phosphate-dependent aminotransferase family. NifS/IscS subfamily. Homodimer. Forms a heterotetramer with IscU, interacts with other sulfur acceptors. It depends on pyridoxal 5'-phosphate as a cofactor.

It is found in the cytoplasm. It catalyses the reaction (sulfur carrier)-H + L-cysteine = (sulfur carrier)-SH + L-alanine. Its pathway is cofactor biosynthesis; iron-sulfur cluster biosynthesis. Its function is as follows. Master enzyme that delivers sulfur to a number of partners involved in Fe-S cluster assembly, tRNA modification or cofactor biosynthesis. Catalyzes the removal of elemental sulfur atoms from cysteine to produce alanine. Functions as a sulfur delivery protein for Fe-S cluster synthesis onto IscU, an Fe-S scaffold assembly protein, as well as other S acceptor proteins. The polypeptide is Cysteine desulfurase IscS (Pseudomonas syringae pv. tomato (strain ATCC BAA-871 / DC3000)).